A 1216-amino-acid polypeptide reads, in one-letter code: 1-phosphatidylinositol 4,5-bisphosphate phosphodiesterase beta-1 (1216 aa).

C17 carries the S-palmitoyl cysteine lipid modification. S236 is subject to Phosphoserine. Residues 316–467 enclose the PI-PLC X-box domain; the sequence is EDMSQPLSHY…LMYKILVKNK (152 aa). Residues H331 and H378 contribute to the active site. A Phosphoserine modification is found at S417. The interval 469–534 is disordered; the sequence is KSHKSSEGSG…MDEGTAGSEA (66 aa). A compositionally biased stretch (basic and acidic residues) spans 472–483; sequence KSSEGSGKKKLS. A compositionally biased stretch (low complexity) spans 491–501; sequence SDSSSVFEPSS. Acidic residues predominate over residues 507–518; it reads ADTESDDDDDDD. T509 carries the phosphothreonine modification. Phosphoserine occurs at positions 511 and 582. The PI-PLC Y-box domain maps to 540–656; that stretch reads MSNLVNYIQP…GYRLKPEFMR (117 aa). In terms of domain architecture, C2 spans 656–786; that stretch reads RRPDKHFDPF…RNERNQPLTL (131 aa). 4 disordered regions span residues 834-891, 967-989, 1072-1095, and 1173-1216; these read DEEE…VKAP, EKSA…GSSA, MDKK…EEEK, and ISED…DTPL. Residues 846-868 show a composition bias toward polar residues; it reads ETSSEAPSETRTTPAENGVNHTA. S887 carries the post-translational modification Phosphoserine; by PKC. A compositionally biased stretch (basic and acidic residues) spans 967 to 979; the sequence is EKSAKKDSKKKSE. 2 positions are modified to phosphoserine: S978 and S987. The span at 1075–1095 shows a compositional bias: basic and acidic residues; it reads KRQEKITEAKSKDKSQMEEEK. A phosphoserine mark is found at S1197, S1199, and S1200. Positions 1205–1216 are enriched in basic and acidic residues; it reads RENPGREFDTPL.

Interacts with DGKQ. The cofactor is Ca(2+). Post-translationally, palmitoylated. Palmitoylation at Cys-17 by ZDHHC21 regulates the signaling activity of PLCB1 and the function of the endothelial barrier. Palmitoylation by ZDHHC21 is stimulated by inflammation.

It localises to the nucleus membrane. The protein resides in the cytoplasm. The catalysed reaction is a 1,2-diacyl-sn-glycero-3-phospho-(1D-myo-inositol-4,5-bisphosphate) + H2O = 1D-myo-inositol 1,4,5-trisphosphate + a 1,2-diacyl-sn-glycerol + H(+). The enzyme catalyses a 1,2-diacyl-sn-glycero-3-phospho-(1D-myo-inositol) + H2O = 1D-myo-inositol 1-phosphate + a 1,2-diacyl-sn-glycerol + H(+). Its function is as follows. Catalyzes the hydrolysis of 1-phosphatidylinositol 4,5-bisphosphate into diacylglycerol (DAG) and inositol 1,4,5-trisphosphate (IP3) and mediates intracellular signaling downstream of G protein-coupled receptors. Regulates the function of the endothelial barrier. This Mus musculus (Mouse) protein is 1-phosphatidylinositol 4,5-bisphosphate phosphodiesterase beta-1.